The following is a 267-amino-acid chain: Putative phosphatase bbp_030 (267 aa).

The active-site Nucleophile is the Asp8. Mg(2+) is bound at residue Asp8. Leu9 lines the phosphate pocket. Mg(2+) is bound at residue Asp10. Phosphate contacts are provided by residues 42–43 and Lys191; that span reads TG. Asp214 is a binding site for Mg(2+). Asn217 is a phosphate binding site.

It belongs to the HAD-like hydrolase superfamily. Cof family. Mg(2+) is required as a cofactor.

The sequence is that of Putative phosphatase bbp_030 from Buchnera aphidicola subsp. Baizongia pistaciae (strain Bp).